The primary structure comprises 419 residues: L-rhamnose isomerase (419 aa).

The Mn(2+) site is built by histidine 262, aspartate 294, and aspartate 296.

The protein belongs to the rhamnose isomerase family. Homotetramer. The cofactor is Mn(2+).

The protein resides in the cytoplasm. The enzyme catalyses L-rhamnopyranose = L-rhamnulose. It participates in carbohydrate degradation; L-rhamnose degradation; glycerone phosphate from L-rhamnose: step 1/3. Its function is as follows. Catalyzes the interconversion of L-rhamnose and L-rhamnulose. The polypeptide is L-rhamnose isomerase (Escherichia coli O127:H6 (strain E2348/69 / EPEC)).